Reading from the N-terminus, the 497-residue chain is Dol-P-Man:Man(7)GlcNAc(2)-PP-Dol alpha-1,6-mannosyltransferase (497 aa).

7 helical membrane passes run 10-30 (FLQS…YVVM), 71-91 (FIGA…ISCL), 92-112 (GFPK…IILS), 125-145 (FGNQ…HFLF), 154-174 (ILAL…NFYP), 178-198 (FLIF…GPIG), and 215-235 (YCVG…SIMW). N-linked (GlcNAc...) asparagine glycosylation is present at Asn253. 4 helical membrane passes run 263 to 285 (IHWY…SLLG), 292 to 312 (VPFF…LPHK), 316 to 336 (FIIS…SRIY), and 346 to 366 (LVNM…VVTF). N-linked (GlcNAc...) asparagine glycosylation occurs at Asn435.

This sequence belongs to the glycosyltransferase 22 family.

It is found in the endoplasmic reticulum membrane. It carries out the reaction an alpha-D-Man-(1-&gt;2)-alpha-D-Man-(1-&gt;2)-alpha-D-Man-(1-&gt;3)-[alpha-D-Man-(1-&gt;2)-alpha-D-Man-(1-&gt;3)-alpha-D-Man-(1-&gt;6)]-beta-D-Man-(1-&gt;4)-beta-D-GlcNAc-(1-&gt;4)-alpha-D-GlcNAc-diphospho-di-trans,poly-cis-dolichol + a di-trans,poly-cis-dolichyl beta-D-mannosyl phosphate = an alpha-D-Man-(1-&gt;2)-alpha-D-Man-(1-&gt;2)-alpha-D-Man-(1-&gt;3)-[alpha-D-Man-(1-&gt;2)-alpha-D-Man-(1-&gt;3)-[alpha-D-Man-(1-&gt;6)]-alpha-D-Man-(1-&gt;6)]-beta-D-Man-(1-&gt;4)-beta-D-GlcNAc-(1-&gt;4)-alpha-D-GlcNAc-diphospho-di-trans,poly-cis-dolichol + a di-trans,poly-cis-dolichyl phosphate + H(+). It functions in the pathway protein modification; protein glycosylation. In terms of biological role, mannosyltransferase that operates in the biosynthetic pathway of dolichol-linked oligosaccharides, the glycan precursors employed in protein asparagine (N)-glycosylation. The assembly of dolichol-linked oligosaccharides begins on the cytosolic side of the endoplasmic reticulum membrane and finishes in its lumen. The sequential addition of sugars to dolichol pyrophosphate produces dolichol-linked oligosaccharides containing fourteen sugars, including two GlcNAcs, nine mannoses and three glucoses. Once assembled, the oligosaccharide is transferred from the lipid to nascent proteins by oligosaccharyltransferases. In the lumen of the endoplasmic reticulum, adds the eighth mannose residue in an alpha-1,6 linkage onto Man(7)GlcNAc(2)-PP-dolichol to produce Man(8)GlcNAc(2)-PP-dolichol. In Arabidopsis thaliana (Mouse-ear cress), this protein is Dol-P-Man:Man(7)GlcNAc(2)-PP-Dol alpha-1,6-mannosyltransferase (ALG12).